Reading from the N-terminus, the 88-residue chain is Small ribosomal subunit protein uS15 (88 aa).

It belongs to the universal ribosomal protein uS15 family. In terms of assembly, part of the 30S ribosomal subunit. Forms a bridge to the 50S subunit in the 70S ribosome, contacting the 23S rRNA.

One of the primary rRNA binding proteins, it binds directly to 16S rRNA where it helps nucleate assembly of the platform of the 30S subunit by binding and bridging several RNA helices of the 16S rRNA. Its function is as follows. Forms an intersubunit bridge (bridge B4) with the 23S rRNA of the 50S subunit in the ribosome. The chain is Small ribosomal subunit protein uS15 from Borreliella burgdorferi (strain ATCC 35210 / DSM 4680 / CIP 102532 / B31) (Borrelia burgdorferi).